The primary structure comprises 1502 residues: DNA-directed RNA polymerase subunit beta' (1502 aa).

Zn(2+)-binding residues include Cys-60, Cys-62, Cys-75, and Cys-78. The segment at 265 to 293 is disordered; the sequence is RKQRDLEDAEQLTGAERERKEYEASQERE. Residues 279 to 293 show a composition bias toward basic and acidic residues; sequence AERERKEYEASQERE. Mg(2+) contacts are provided by Asp-626, Asp-628, and Asp-630. Cys-1002, Cys-1075, Cys-1082, and Cys-1085 together coordinate Zn(2+). Residues 1472 to 1502 are disordered; that stretch reads SDDNGDEVGKNGEFADETPFTGDSDDRDNEI.

Belongs to the RNA polymerase beta' chain family. As to quaternary structure, the RNAP catalytic core consists of 2 alpha, 1 beta, 1 beta' and 1 omega subunit. When a sigma factor is associated with the core the holoenzyme is formed, which can initiate transcription. It depends on Mg(2+) as a cofactor. Zn(2+) serves as cofactor.

The enzyme catalyses RNA(n) + a ribonucleoside 5'-triphosphate = RNA(n+1) + diphosphate. Functionally, DNA-dependent RNA polymerase catalyzes the transcription of DNA into RNA using the four ribonucleoside triphosphates as substrates. The sequence is that of DNA-directed RNA polymerase subunit beta' from Roseiflexus castenholzii (strain DSM 13941 / HLO8).